Reading from the N-terminus, the 863-residue chain is Ubiquitin carboxyl-terminal hydrolase 13 (863 aa).

At S114 the chain carries Phosphoserine; by AURKB. T122 is modified (phosphothreonine). The UBP-type; degenerate zinc-finger motif lies at 187 to 295; it reads PVSKYANNLT…KHLAHFGIDM (109 aa). The Zn(2+) site is built by C211, C214, C231, and H244. A Glycyl lysine isopeptide (Lys-Gly) (interchain with G-Cter in SUMO2) cross-link involves residue K311. The USP domain occupies 336–861; that stretch reads TGLKNLGNSC…LGYMYFYRRI (526 aa). The active-site Nucleophile is C345. Residue K405 forms a Glycyl lysine isopeptide (Lys-Gly) (interchain with G-Cter in SUMO2) linkage. UBA domains are found at residues 652-693 and 727-767; these read DIDE…IIVH and QPPE…IFSH. H823 functions as the Proton acceptor in the catalytic mechanism.

It belongs to the peptidase C19 family. In terms of assembly, interacts with UFD1. Interacts (via UBA domains) with SIAH2 (when ubiquitinated). Interacts with BAG6; the interaction is direct and may mediate UBL4A deubiquitination. Interacts (via UBA 2 domain) with AMFR; the interaction is direct. Interacts with UBL4A; may be indirect via BAG6. Interacts with NEDD4. Phosphorylated by AURKB at Ser-114; leading to stabilization of cell cycle proteins such as SKP2 and AURKB, but not MCL1. As to expression, highly expressed in ovary and testes.

It is found in the cytoplasm. The catalysed reaction is Thiol-dependent hydrolysis of ester, thioester, amide, peptide and isopeptide bonds formed by the C-terminal Gly of ubiquitin (a 76-residue protein attached to proteins as an intracellular targeting signal).. Its activity is regulated as follows. Specifically inhibited by spautin-1 (specific and potent autophagy inhibitor-1), a derivative of MBCQ that binds to USP13 and inhibits deubiquitinase activity. Regulated by PIK3C3/VPS34-containing complexes. The weak deubiquitinase activity in vitro suggests the existence of some mechanism that activates the enzyme. Functionally, deubiquitinase that mediates deubiquitination of target proteins such as BECN1, MITF, SKP2 and USP10 and is involved in various processes such as autophagy, endoplasmic reticulum-associated degradation (ERAD), cell cycle progression or DNA damage response. Component of a regulatory loop that controls autophagy and p53/TP53 levels: mediates deubiquitination of BECN1, a key regulator of autophagy, leading to stabilize the PIK3C3/VPS34-containing complexes. Alternatively, forms with NEDD4 a deubiquitination complex, which subsequently stabilizes VPS34 to promote autophagy. Also deubiquitinates USP10, an essential regulator of p53/TP53 stability. In turn, PIK3C3/VPS34-containing complexes regulate USP13 stability, suggesting the existence of a regulatory system by which PIK3C3/VPS34-containing complexes regulate p53/TP53 protein levels via USP10 and USP13. Recruited by nuclear UFD1 and mediates deubiquitination of SKP2, thereby regulating endoplasmic reticulum-associated degradation (ERAD). Also regulates ERAD through the deubiquitination of UBL4A a component of the BAG6/BAT3 complex. Mediates stabilization of SIAH2 independently of deubiquitinase activity: binds ubiquitinated SIAH2 and acts by impairing SIAH2 autoubiquitination. Regulates the cell cycle progression by stabilizing cell cycle proteins such as SKP2 and AURKB. In addition, plays an important role in maintaining genomic stability and in DNA replication checkpoint activation via regulation of RAP80 and TOPBP1. Deubiquitinates the multifunctional protein HMGB1 and subsequently drives its nucleocytoplasmic localization and its secretion. Positively regulates type I and type II interferon signalings by deubiquitinating STAT1 but negatively regulates antiviral response by deubiquitinating STING1. In Homo sapiens (Human), this protein is Ubiquitin carboxyl-terminal hydrolase 13 (USP13).